A 212-amino-acid chain; its full sequence is Leucine efflux protein (212 aa).

6 consecutive transmembrane segments (helical) span residues 12 to 32, 49 to 69, 71 to 91, 122 to 142, 153 to 173, and 188 to 208; these read TYLV…LFVL, GVFI…ATLI, TTPI…LYLG, ILSL…VQFI, FFIL…FLII, and LAKV…ARLA.

The protein belongs to the Rht family.

It is found in the cell inner membrane. The catalysed reaction is L-leucine(in) + H(+)(out) = L-leucine(out) + H(+)(in). Leucine export is inhibited by the proton ionophore carbonyl cyanide m-chlorophenylhydrazone (CCCP). Functionally, exporter of leucine. Can also transport its natural analog L-alpha-amino-n-butyric acid and some other structurally unrelated amino acids. Leucine excretion is probably driven by proton motive force. The chain is Leucine efflux protein from Escherichia coli (strain K12).